Consider the following 183-residue polypeptide: Ferredoxin-2, mitochondrial (183 aa).

A mitochondrion-targeting transit peptide spans 1-52 (MAASVAWGGVNAGFLLRAARGAWWSRPGGFWGSGEAAAPAIARKFRATGSRP). The 103-residue stretch at 68–170 (VNVVFVDRSG…GAEFTLPKIT (103 aa)) folds into the 2Fe-2S ferredoxin-type domain. [2Fe-2S] cluster is bound by residues C105, C111, C114, and C151.

It belongs to the adrenodoxin/putidaredoxin family. As to quaternary structure, component of the mitochondrial core iron-sulfur cluster (ISC) complex composed of NFS1, LYRM4, NDUFAB1, ISCU, FXN, and FDX2; this complex is a heterohexamer containing two copies of each monomer. Form a heterodimer complex with NFS1. Interacts (in both their reduced and oxidized states) with the cysteine desulfurase (NFS1:LYRM4) complex; this interaction stimulates cysteine desulfurase activity, and serves as a reductant for Fe-S cluster assembly. It depends on [2Fe-2S] cluster as a cofactor.

It is found in the mitochondrion. The protein resides in the mitochondrion matrix. Electron donor, of the core iron-sulfur cluster (ISC) assembly complex, that acts to reduce the persulfide into sulfide during [2Fe-2S] clusters assembly on the scaffolding protein ISCU. The core iron-sulfur cluster (ISC) assembly complex is involved in the de novo synthesis of a [2Fe-2S] cluster, the first step of the mitochondrial iron-sulfur protein biogenesis. This process is initiated by the cysteine desulfurase complex (NFS1:LYRM4:NDUFAB1) that produces persulfide which is delivered on the scaffold protein ISCU in a FXN-dependent manner. Then this complex is stabilized by FDX2 which provides reducing equivalents to accomplish the [2Fe-2S] cluster assembly. Finally, the [2Fe-2S] cluster is transferred from ISCU to chaperone proteins, including HSCB, HSPA9 and GLRX5. Essential for coenzyme Q biosynthesis: together with FDXR, transfers the electrons required for the hydroxylation reaction performed by COQ6. This chain is Ferredoxin-2, mitochondrial, found in Bos taurus (Bovine).